The sequence spans 90 residues: Small ribosomal subunit protein uS15c (90 aa).

The protein belongs to the universal ribosomal protein uS15 family. As to quaternary structure, part of the 30S ribosomal subunit.

It localises to the plastid. The protein resides in the chloroplast. The chain is Small ribosomal subunit protein uS15c (rps15) from Manihot esculenta (Cassava).